Consider the following 326-residue polypeptide: Apolipoprotein F (326 aa).

An N-terminal signal peptide occupies residues 1–35 (MTGLCGYSAPDMRGLRLIMIPVELLLCYLLLHPVD). Residues 36–164 (ATSYGKQTNV…EQQSTGRVGR (129 aa)) constitute a propeptide that is removed on maturation. Asn-118 is a glycosylation site (N-linked (GlcNAc...) asparagine). An O-linked (GalNAc...) threonine glycan is attached at Thr-274. Phosphoserine is present on Ser-323.

Belongs to the apolipoprotein F family. In terms of processing, O-glycosylated with core 1 or possibly core 8 glycans. In terms of tissue distribution, expressed by the liver and secreted in plasma.

It localises to the secreted. Functionally, minor apolipoprotein that associates with LDL. Inhibits cholesteryl ester transfer protein (CETP) activity and appears to be an important regulator of cholesterol transport. Also associates to a lesser degree with VLDL, Apo-AI and Apo-AII. This Homo sapiens (Human) protein is Apolipoprotein F (APOF).